A 336-amino-acid polypeptide reads, in one-letter code: Phosphate acyltransferase (336 aa).

It belongs to the PlsX family. Homodimer. Probably interacts with PlsY.

It localises to the cytoplasm. It catalyses the reaction a fatty acyl-[ACP] + phosphate = an acyl phosphate + holo-[ACP]. The protein operates within lipid metabolism; phospholipid metabolism. Catalyzes the reversible formation of acyl-phosphate (acyl-PO(4)) from acyl-[acyl-carrier-protein] (acyl-ACP). This enzyme utilizes acyl-ACP as fatty acyl donor, but not acyl-CoA. The polypeptide is Phosphate acyltransferase (Dictyoglomus turgidum (strain DSM 6724 / Z-1310)).